The sequence spans 294 residues: N-acetylmuramic acid 6-phosphate etherase (294 aa).

Residues 54 to 217 (VISSFQNGGR…STASMIGIGK (164 aa)) enclose the SIS domain. Glu82 serves as the catalytic Proton donor. Glu113 is an active-site residue.

It belongs to the GCKR-like family. MurNAc-6-P etherase subfamily. Homodimer.

It carries out the reaction N-acetyl-D-muramate 6-phosphate + H2O = N-acetyl-D-glucosamine 6-phosphate + (R)-lactate. It participates in amino-sugar metabolism; N-acetylmuramate degradation. Specifically catalyzes the cleavage of the D-lactyl ether substituent of MurNAc 6-phosphate, producing GlcNAc 6-phosphate and D-lactate. The sequence is that of N-acetylmuramic acid 6-phosphate etherase from Bacillus cytotoxicus (strain DSM 22905 / CIP 110041 / 391-98 / NVH 391-98).